The following is a 198-amino-acid chain: Virion infectivity factor (198 aa).

An RNA-binding region spans residues 76-115; that stretch reads GERPWHLGHGIGLEWRQGKYSTQIDPETADQLIHTRYFTC. Position 97 is a phosphothreonine; by host MAP4K1 (Thr97). The short motif at 109–140 is the HCCH motif element; that stretch reads HTRYFTCFAAGAVRQAILGERILTFCHFQSGH. The residue at position 145 (Thr145) is a Phosphothreonine; by host. Positions 145–154 match the BC-box-like motif motif; that stretch reads TLQFLAFRKV. The tract at residues 152 to 170 is multimerization; sequence RKVVESQDKQPKGPRRPLP. The tract at residues 159–198 is disordered; that stretch reads DKQPKGPRRPLPSVTKLTEDRWNKHRTTTGRRENHTLSGC. Ser171 is modified (phosphoserine; by host MAP4K1). The membrane association stretch occupies residues 177 to 178; it reads ED. Residues 188 to 198 show a composition bias toward basic and acidic residues; it reads GRRENHTLSGC.

It belongs to the primate lentivirus group Vif protein family. In terms of assembly, homomultimer; in vitro and presumably in vivo. Interacts with viral Pr55Gag precursor, host APOBEC3G, UBCE7IP1 isoform 3/ZIN, ABCE1 and possibly with SAT. Forms an E3 ligase complex by interacting with host CUL5 and elongin BC complex (ELOB and ELOC). Highly phosphorylated on serine and threonine residues. Thr-97 and Ser-171 are phosphorylated by the mitogen activated kinase MAP4K1. In terms of processing, polyubiquitinated and degraded by the proteasome in the presence of APOBEC3G.

It localises to the host cytoplasm. Its subcellular location is the host cell membrane. The protein localises to the virion. Counteracts the innate antiviral activity of APOBEC3G. Forms a complex with host APOBEC3G thus preventing the entry of this lethally hypermutating enzyme into progeny virions. Functions as an adapter molecule, recruiting APOBEC3G to the ubiquitin-proteasome machinery. Targets APOBEC3G for degradation through the assembly with elongin BC complex, CUL5 and RBX1. Binds viral RNA and affects the stability of viral nucleoprotein core. May play a role in viral morphology. Interacts with host ABCE1, which seems to be involved in lentiviruses capsid formation and displays RNase L inhibitor activity. This interaction may play a role in protecting viral RNA from damage during viral assembly. May interact with host SAT, which is a regulator of polyamine cell level. This interaction may be relevant since polyamines affect viral RNA properties. The polypeptide is Virion infectivity factor (Pan troglodytes (Chimpanzee)).